We begin with the raw amino-acid sequence, 380 residues long: Cytochrome b (380 aa).

4 helical membrane-spanning segments follow: residues 34–54 (FGSL…FLAM), 78–99 (WLVR…YLHI), 114–134 (WNIG…GYVL), and 179–199 (FFAF…LHLL). Heme b is bound by residues histidine 84 and histidine 98. Heme b-binding residues include histidine 183 and histidine 197. Histidine 202 lines the a ubiquinone pocket. 4 helical membrane passes run 227–247 (YKDT…SMLS), 289–309 (LGGV…PMIH), 321–341 (MTQF…WIGG), and 348–368 (FIEI…IFMP).

This sequence belongs to the cytochrome b family. As to quaternary structure, the cytochrome bc1 complex contains 3 respiratory subunits (MT-CYB, CYC1 and UQCRFS1), 2 core proteins (UQCRC1 and UQCRC2) and probably 6 low-molecular weight proteins. Heme b serves as cofactor.

It is found in the mitochondrion inner membrane. Functionally, component of the ubiquinol-cytochrome c reductase complex (complex III or cytochrome b-c1 complex) that is part of the mitochondrial respiratory chain. The b-c1 complex mediates electron transfer from ubiquinol to cytochrome c. Contributes to the generation of a proton gradient across the mitochondrial membrane that is then used for ATP synthesis. This is Cytochrome b (mt-cyb) from Ranodon sibiricus (Siberian salamander).